Here is a 487-residue protein sequence, read N- to C-terminus: MVLKDLCDRIVAAKCSSKSSTEIVDNTQVPASSKAGSSDSKFPKASLWSTFFTSGFSVDETYSESSSSEKKTVHSRNSGWAAAVRKVVSGGSMRRFQERVLGSCRTDVSSSDGDIWLLGVCHKISQHESTGDVDIRNVFAAFEQDFFSRILITYRKGFDAIEDSKYTSDVNWGCMLRSSQMLVAQALLFHKLGRSWRKTVDKPVDKEYIDILQLFGDSEAAAFSIHNLLQAGKGYGLAVGSWVGPYAMCRTWEVLARNQREKNEQGEQLLPMAIYVVSGDEDGERGGAPVVCIEDACKRCLEFSRGLVPWTPLLLLVPLVLGLDKVNLRYIPLLQSTFKFPQSLGILGGKPGASTYIIGVQNDKAFYLDPHEVKPVVNITGDTQEPNTSSYHCNISRHMPLDSIDPSLAIGFYCRDKDDFDDFCSRATKLAEESNGAPLFTVAQSRSLPMQVTSNSVSGDDTRFEEDDSLSMNLVNDAGNEDDWQFL.

Catalysis depends on cysteine 174, which acts as the Nucleophile. Residues aspartate 369 and histidine 371 contribute to the active site.

The protein belongs to the peptidase C54 family. Interacts with ATG8.

The protein localises to the cytoplasm. It catalyses the reaction [protein]-C-terminal L-amino acid-glycyl-phosphatidylethanolamide + H2O = [protein]-C-terminal L-amino acid-glycine + a 1,2-diacyl-sn-glycero-3-phosphoethanolamine. Cysteine protease that plays a key role in autophagy by mediating both proteolytic activation and delipidation of ATG8 family proteins. The protease activity is required for proteolytic activation of ATG8 family proteins: cleaves the C-terminal amino acid of ATG8 proteins to reveal a C-terminal glycine. Exposure of the glycine at the C-terminus is essential for ATG8 proteins conjugation to phosphatidylethanolamine (PE) and insertion to membranes, which is necessary for autophagy. In addition to the protease activity, also mediates delipidation of PE-conjugated ATG8 proteins. This chain is Cysteine protease ATG4 (ATG4), found in Medicago truncatula (Barrel medic).